A 381-amino-acid chain; its full sequence is Cytochrome b (381 aa).

The next 4 membrane-spanning stretches (helical) occupy residues 31–51 (FGFLSSICLIVQILTGIFLAM), 75–97 (WLLRYIHTNGASMFFIVVYIHIF), 112–132 (VWVIGVLILLLMILTAFIGYV), and 178–198 (FFSLHYLMPFVIAAVSLVHLA). His-81 and His-95 together coordinate heme b. Heme b-binding residues include His-182 and His-196. A ubiquinone is bound at residue His-201. Helical transmembrane passes span 224 to 244 (FIVKDFLGMVIFIIFFSIFVY), 288 to 308 (LGGVTAMISAIAILAFLPWIH), 320 to 340 (LYRLFYWVMISCCLILGWIGG), and 347 to 367 (YVIIGQIASIYYFIYFIILLP).

The protein belongs to the cytochrome b family. As to quaternary structure, the main subunits of complex b-c1 are: cytochrome b, cytochrome c1 and the Rieske protein. It depends on heme b as a cofactor.

It localises to the mitochondrion inner membrane. Functionally, component of the ubiquinol-cytochrome c reductase complex (complex III or cytochrome b-c1 complex) that is part of the mitochondrial respiratory chain. The b-c1 complex mediates electron transfer from ubiquinol to cytochrome c. Contributes to the generation of a proton gradient across the mitochondrial membrane that is then used for ATP synthesis. This Chondrus crispus (Carrageen Irish moss) protein is Cytochrome b (MT-CYB).